Consider the following 286-residue polypeptide: Undecaprenyl-diphosphatase (286 aa).

A run of 7 helical transmembrane segments spans residues 5-25 (WFII…FLPV), 55-75 (IDAF…VLYW), 92-112 (SGFK…VLGL), 122-142 (LFNP…MIFA), 185-205 (IIGA…SFFL), 229-249 (MHIV…LIVV), and 264-284 (FAMY…FNVI).

This sequence belongs to the UppP family.

It is found in the cell membrane. The enzyme catalyses di-trans,octa-cis-undecaprenyl diphosphate + H2O = di-trans,octa-cis-undecaprenyl phosphate + phosphate + H(+). Its function is as follows. Catalyzes the dephosphorylation of undecaprenyl diphosphate (UPP). Confers resistance to bacitracin. This is Undecaprenyl-diphosphatase from Clostridium novyi (strain NT).